The chain runs to 27 residues: Carcinustatin-20 (27 aa).

Leucine amide is present on Leu27.

Belongs to the allatostatin family.

It localises to the secreted. Its function is as follows. May act as a neurotransmitter or neuromodulator. The sequence is that of Carcinustatin-20 from Carcinus maenas (Common shore crab).